The following is a 280-amino-acid chain: Phosphatidylglycerol--prolipoprotein diacylglyceryl transferase (280 aa).

2 helical membrane passes run 59–79 (FLTW…ILFY) and 97–117 (GGMS…LFTW). Arginine 142 contacts a 1,2-diacyl-sn-glycero-3-phospho-(1'-sn-glycerol). The next 2 membrane-spanning stretches (helical) occupy residues 207 to 227 (GFLA…CECF) and 233 to 253 (FIGF…PMAI).

This sequence belongs to the Lgt family.

Its subcellular location is the cell inner membrane. It carries out the reaction L-cysteinyl-[prolipoprotein] + a 1,2-diacyl-sn-glycero-3-phospho-(1'-sn-glycerol) = an S-1,2-diacyl-sn-glyceryl-L-cysteinyl-[prolipoprotein] + sn-glycerol 1-phosphate + H(+). The protein operates within protein modification; lipoprotein biosynthesis (diacylglyceryl transfer). Its function is as follows. Catalyzes the transfer of the diacylglyceryl group from phosphatidylglycerol to the sulfhydryl group of the N-terminal cysteine of a prolipoprotein, the first step in the formation of mature lipoproteins. This is Phosphatidylglycerol--prolipoprotein diacylglyceryl transferase from Gluconacetobacter diazotrophicus (strain ATCC 49037 / DSM 5601 / CCUG 37298 / CIP 103539 / LMG 7603 / PAl5).